A 57-amino-acid chain; its full sequence is Peptide BmKa1 (57 aa).

The first 22 residues, 1-22 (MKPRVFFLLFLLVAAMIETGES), serve as a signal peptide directing secretion. Composition is skewed to acidic residues over residues 20 to 29 (GESEENEEGS) and 45 to 57 (VDNE…GDSD). Residues 20–57 (GESEENEEGSNESGKSTEAKNTDASVDNEDSDIDGDSD) form a disordered region.

Belongs to the non-disulfide-bridged peptide (NDBP) superfamily. In terms of tissue distribution, expressed by the venom gland.

It is found in the secreted. This is Peptide BmKa1 from Olivierus martensii (Manchurian scorpion).